The chain runs to 170 residues: Peptide deformylase (170 aa).

The Fe cation site is built by Cys-94 and His-136. The active site involves Glu-137. His-140 is a binding site for Fe cation.

This sequence belongs to the polypeptide deformylase family. It depends on Fe(2+) as a cofactor.

It carries out the reaction N-terminal N-formyl-L-methionyl-[peptide] + H2O = N-terminal L-methionyl-[peptide] + formate. In terms of biological role, removes the formyl group from the N-terminal Met of newly synthesized proteins. Requires at least a dipeptide for an efficient rate of reaction. N-terminal L-methionine is a prerequisite for activity but the enzyme has broad specificity at other positions. The polypeptide is Peptide deformylase (Stenotrophomonas maltophilia (strain R551-3)).